A 382-amino-acid polypeptide reads, in one-letter code: Carbamoyl phosphate synthase small chain (382 aa).

Positions 1-189 (MIKSALLVLE…GLPEAKKEDE (189 aa)) are CPSase. The L-glutamine site is built by S47, G241, and G243. The region spanning 193 to 380 (HVVAYDFGAK…IELIEQYRKT (188 aa)) is the Glutamine amidotransferase type-1 domain. C269 functions as the Nucleophile in the catalytic mechanism. The L-glutamine site is built by L270, Q273, N311, G313, and F314. Catalysis depends on residues H353 and E355.

Belongs to the CarA family. As to quaternary structure, composed of two chains; the small (or glutamine) chain promotes the hydrolysis of glutamine to ammonia, which is used by the large (or ammonia) chain to synthesize carbamoyl phosphate. Tetramer of heterodimers (alpha,beta)4.

The catalysed reaction is hydrogencarbonate + L-glutamine + 2 ATP + H2O = carbamoyl phosphate + L-glutamate + 2 ADP + phosphate + 2 H(+). It carries out the reaction L-glutamine + H2O = L-glutamate + NH4(+). The protein operates within amino-acid biosynthesis; L-arginine biosynthesis; carbamoyl phosphate from bicarbonate: step 1/1. It functions in the pathway pyrimidine metabolism; UMP biosynthesis via de novo pathway; (S)-dihydroorotate from bicarbonate: step 1/3. Functionally, small subunit of the glutamine-dependent carbamoyl phosphate synthetase (CPSase). CPSase catalyzes the formation of carbamoyl phosphate from the ammonia moiety of glutamine, carbonate, and phosphate donated by ATP, constituting the first step of 2 biosynthetic pathways, one leading to arginine and/or urea and the other to pyrimidine nucleotides. The small subunit (glutamine amidotransferase) binds and cleaves glutamine to supply the large subunit with the substrate ammonia. This chain is Carbamoyl phosphate synthase small chain, found in Escherichia coli O157:H7.